A 37-amino-acid polypeptide reads, in one-letter code: Esculentin-2B (37 aa).

Cys31 and Cys37 are oxidised to a cystine.

Belongs to the frog skin active peptide (FSAP) family. Esculentin subfamily. Expressed by the skin glands.

It is found in the secreted. Functionally, shows antibacterial activity against representative Gram-negative and Gram-positive bacterial species, and hemolytic activity. In Pelophylax lessonae (Pool frog), this protein is Esculentin-2B.